The sequence spans 190 residues: CD70 antigen (190 aa).

The Cytoplasmic portion of the chain corresponds to 1–17; sequence MEEEGSGCNVPRLPWAS. A helical membrane pass occupies residues 18 to 38; the sequence is ILRAALLLLLIGMVIYCFLCG. The Extracellular portion of the chain corresponds to 39–190; sequence QRFTQQQLDS…TFFGVQLVRP (152 aa). Residues 52–188 enclose the THD domain; that stretch reads DLAELLLNHT…DETFFGVQLV (137 aa). N59 and N110 each carry an N-linked (GlcNAc...) asparagine glycan. 2 disulfides stabilise this stretch: C111/C148 and C130/C165. The N-linked (GlcNAc...) asparagine glycan is linked to N167.

Belongs to the tumor necrosis factor family. In terms of assembly, homotrimer. In terms of processing, N-glycosylated.

Its subcellular location is the cell membrane. Functionally, expressed at the plasma membrane of B cells, it is the ligand of the CD27 receptor which is specifically expressed at the surface of T cells. The CD70-CD27 signaling pathway mediates antigen-specific T cell activation and expansion which in turn provides immune surveillance of B cells. This is CD70 antigen from Sus scrofa (Pig).